The sequence spans 291 residues: MRTITTIAELRDALAEHRRAGRSVGLVPTMGYLHVGHMELVRRARGENDVVVASIFVNPLQFGANEDLGEYPRDLARDQELLTDGGVDILFAPGVSDMYPRPMETVVDVPKLGSELEGAVRPGHFAGVATVVTKLFNIVQPDRAYFGEKDFQQLQIIRRMVEDLAQPVKVVGVPTVREEDGLACSSRNVYLTTEERRAAAIVPRALDEAERLIASGVTEPAEIEKRVLEFLAGEPLARPEVVALRDPETLEPFGEISGKPVLILLFVRFGTTKLLDNRVIAPKSARFAKVA.

30–37 (MGYLHVGH) is a binding site for ATP. Histidine 37 (proton donor) is an active-site residue. Glutamine 61 contacts (R)-pantoate. A beta-alanine-binding site is contributed by glutamine 61. An ATP-binding site is contributed by 147–150 (GEKD). Residue glutamine 153 participates in (R)-pantoate binding. Residues valine 176 and 184-187 (CSSR) each bind ATP.

It belongs to the pantothenate synthetase family. As to quaternary structure, homodimer.

The protein resides in the cytoplasm. It carries out the reaction (R)-pantoate + beta-alanine + ATP = (R)-pantothenate + AMP + diphosphate + H(+). It participates in cofactor biosynthesis; (R)-pantothenate biosynthesis; (R)-pantothenate from (R)-pantoate and beta-alanine: step 1/1. Catalyzes the condensation of pantoate with beta-alanine in an ATP-dependent reaction via a pantoyl-adenylate intermediate. The sequence is that of Pantothenate synthetase from Sinorhizobium medicae (strain WSM419) (Ensifer medicae).